A 949-amino-acid polypeptide reads, in one-letter code: ATPase 1, plasma membrane-type (949 aa).

Position 2 is an N-acetylserine (Ser2). Over 2–61 (SGLEDIKNETVDLEKIPIEEVFQQLKCTREGLTTQEGEDRIVIFGPNKLEEKKESKILKF) the chain is Cytoplasmic. The helical transmembrane segment at 62-81 (LGFMWNPLSWVMEAAALMAI) threads the bilayer. Topologically, residues 82–93 (ALANGDNRPPDW) are extracellular. A helical membrane pass occupies residues 94–114 (QDFVGIICLLVINSTISFIEE). Topologically, residues 115-243 (NNAGNAAAAL…GHFQKVLTSI (129 aa)) are cytoplasmic. The chain crosses the membrane as a helical span at residues 244–264 (GNFCICSIAIGIAIEIVVMYP). Over 265–273 (IQHRKYRDG) the chain is Extracellular. A helical transmembrane segment spans residues 274–291 (IDNLLVLLIGGIPIAMPT). At 292–643 (VLSVTMAIGS…TSRAIFQRMK (352 aa)) the chain is on the cytoplasmic side. The 4-aspartylphosphate intermediate role is filled by Asp329. Mg(2+)-binding residues include Asp588 and Asp592. Residues 644–665 (NYTIYAVSITIRIVFGFMLIAL) traverse the membrane as a helical segment. At 666–670 (IWEFD) the chain is on the extracellular side. Residues 671-693 (FSAFMVLIIAILNDGTIMTISKD) form a helical membrane-spanning segment. At 694–709 (RVKPSPTPDSWKLKEI) the chain is on the cytoplasmic side. A helical transmembrane segment spans residues 710-730 (FATGIVLGGYQAIMSVIFFWA). Topologically, residues 731 to 751 (AHKTDFFSDKFGVRSIRDNND) are extracellular. Residues 752 to 772 (ELMGAVYLQVSIISQALIFVT) form a helical membrane-spanning segment. Over 773-784 (RSRSWSFVERPG) the chain is Cytoplasmic. Residues 785–805 (ALLMIAFVIAQLVATLIAVYA) form a helical membrane-spanning segment. Topologically, residues 806–813 (DWTFAKVK) are extracellular. Residues 814–834 (GIGWGWAGVIWIYSIVTYFPQ) traverse the membrane as a helical segment. Residues 835 to 949 (DILKFAIRYI…IDTAGHHYTV (115 aa)) lie on the Cytoplasmic side of the membrane. A Phosphothreonine modification is found at Thr881. A phosphoserine mark is found at Ser899 and Ser931. The interaction with 14-3-3 proteins stretch occupies residues 947–949 (YTV). Thr948 carries the phosphothreonine modification.

It belongs to the cation transport ATPase (P-type) (TC 3.A.3) family. Type IIIA subfamily. As to quaternary structure, binds to 14-3-3 proteins. The binding is induced by phosphorylation of Thr-948. Binding to 14-3-3 proteins activates the H(+)-ATPase. Interacts with PPI1; this interaction promotes ATPase activity. Interacts with PSY1R. Part of a functional complex containing PSKR1, BAK1, CNGC17, and AHA. Interacts with CNGC17 and PSKR1. Triggered by SAUR9 via the phosphorylation of the C-terminal autoinhibitory domain. Interacts with AHA2. Binds to CBC1 and CBC2. Post-translationally, phosphorylated, probably by PHOT1 and PHOT2, at C-terminal Thr-948 in guard cells in response to blue light to induce stomatal opening. In terms of tissue distribution, expressed in guard cells, mesophyll cells, leaves and roots.

It localises to the cell membrane. The enzyme catalyses ATP + H2O + H(+)(in) = ADP + phosphate + 2 H(+)(out). With respect to regulation, phosphorylation on Thr residues is repressed by tyrphostin 9, sphingosine, GW5074 and BML-265. By contrast, the fungal phytotoxin fusicoccin (FC) promotes phosphorylation of Thr-948 independently to BHP, thus leading to large stomatal opening. Functionally, the plasma membrane H(+) ATPase of plants and fungi generates a proton gradient that drives the active transport of nutrients by H(+)-symport. The resulting external acidification and/or internal alkinization may mediate growth responses. Forms a functional cation-translocating unit with CNGC17 that is activated by PSKR1/BAK1 and possibly other BAK1/RLK complexes. Promotes stomatal opening in response to blue light. The chain is ATPase 1, plasma membrane-type from Arabidopsis thaliana (Mouse-ear cress).